A 256-amino-acid chain; its full sequence is uncharacterized protein (256 aa).

Residues 1–23 are disordered; the sequence is MIPPCENAPHIIYHESQRGTRDR. Positions 12 to 23 are enriched in basic and acidic residues; sequence IYHESQRGTRDR.

This is an uncharacterized protein from Homo sapiens (Human).